The chain runs to 2641 residues: Inverse autotransporter adhesin YeeJ (2641 aa).

The N-terminal stretch at 1–25 (MGIKLRRLTAGICLITQLVFPMAAA) is a signal peptide. The LysM domain maps to 50-98 (VPYTLGALESAQSVAERFGISVAELRKLNQFRTFARGFDNVRQGDELDV). Residues 125–400 (TSQQIGSLLA…SRFDLVDRNN (276 aa)) are inverse autotransporter. Positions 513 to 605 (QKDSSVSLSS…GVDAAKAPAV (93 aa)) are invasin 3 domain. Big-1 domains are found at residues 617–711 (HSSI…AGFI), 721–815 (IATL…VSFV), 822–913 (QVDL…VIFI), 920–1017 (ALTL…MTFV), 1024–1116 (VVVL…VNIA), 1123–1220 (QVTL…VTFV), 1227–1319 (VVVL…VNIA), 1326–1423 (QVTL…VTFV), 1430–1523 (LVVL…VHFI), 1531–1633 (IIEL…SINV), 1641–1734 (HLTL…VTYV), 1741–1837 (EISL…VNFI), 1844–1941 (QVNL…VTLI), 1948–2032 (KLAS…PTEV), 2048–2141 (ITSL…VIDQ), 2142–2235 (KLTL…IVKV), and 2244–2336 (VASF…ITLV). The tract at residues 2538–2641 (KSWWVNAGDA…FAYATCYKNL (104 aa)) is C-type lectin domain.

The protein belongs to the intimin/invasin family.

The protein localises to the cell outer membrane. Functionally, a probable inverse autotransporter, it may be involved in biofilm formation and cell adhesion. May bind peptidoglycan via its LysM domain. This Escherichia coli O157:H7 protein is Inverse autotransporter adhesin YeeJ (yeeJ).